We begin with the raw amino-acid sequence, 123 residues long: MADLKKLAEEIVGLTLLEAQELKTILKDEYGIEPAAGGAVMMAGPADAGAAEEEKTEFDVVLKSPGASKINVIKEVRGITGLGLKEAKDLVEAGGKIKEGCDKAEAEEIKGKLEAAGAEVELA.

The protein belongs to the bacterial ribosomal protein bL12 family. Homodimer. Part of the ribosomal stalk of the 50S ribosomal subunit. Forms a multimeric L10(L12)X complex, where L10 forms an elongated spine to which 2 to 4 L12 dimers bind in a sequential fashion. Binds GTP-bound translation factors.

In terms of biological role, forms part of the ribosomal stalk which helps the ribosome interact with GTP-bound translation factors. Is thus essential for accurate translation. The chain is Large ribosomal subunit protein bL12 from Roseobacter denitrificans (strain ATCC 33942 / OCh 114) (Erythrobacter sp. (strain OCh 114)).